A 141-amino-acid polypeptide reads, in one-letter code: HTH-type transcriptional regulator LrpA (141 aa).

An HTH asnC-type domain is found at 2–63 (VDERDKIILD…KINPKKLGYS (62 aa)). Residues 21-40 (FTEIAKILGISETAVRKRVK) constitute a DNA-binding region (H-T-H motif).

Homooctamer; tetramer of dimers.

In terms of biological role, DNA-binding protein that negatively regulates its own transcription. Interferes with RNA polymerase (RNAP) recruitment by inhibiting the association of RNAP with the TBP-TFB promoter complex. This chain is HTH-type transcriptional regulator LrpA (lrpA), found in Pyrococcus abyssi (strain GE5 / Orsay).